The sequence spans 306 residues: Putative B3 domain-containing protein Os03g0621600 (306 aa).

Residues 29–122 (FSVLCLMPIM…QLKTLIFDSS (94 aa)) constitute a DNA-binding region (TF-B3 1). The disordered stretch occupies residues 139–166 (YDIAMRNSQDEKKKRKQRDISRQGTVKP). The TF-B3 2 DNA-binding region spans 210 to 306 (GYVMNNSSIH…VMDVHIIRRK (97 aa)).

The protein localises to the nucleus. The sequence is that of Putative B3 domain-containing protein Os03g0621600 from Oryza sativa subsp. japonica (Rice).